The chain runs to 307 residues: Aspartate carbamoyltransferase catalytic subunit (307 aa).

Carbamoyl phosphate contacts are provided by Arg49 and Thr50. Lys77 is a binding site for L-aspartate. Arg99, His127, and Gln130 together coordinate carbamoyl phosphate. Positions 160 and 211 each coordinate L-aspartate. Carbamoyl phosphate is bound by residues Ala250 and Pro251.

This sequence belongs to the aspartate/ornithine carbamoyltransferase superfamily. ATCase family. Heterododecamer (2C3:3R2) of six catalytic PyrB chains organized as two trimers (C3), and six regulatory PyrI chains organized as three dimers (R2).

The enzyme catalyses carbamoyl phosphate + L-aspartate = N-carbamoyl-L-aspartate + phosphate + H(+). It participates in pyrimidine metabolism; UMP biosynthesis via de novo pathway; (S)-dihydroorotate from bicarbonate: step 2/3. Functionally, catalyzes the condensation of carbamoyl phosphate and aspartate to form carbamoyl aspartate and inorganic phosphate, the committed step in the de novo pyrimidine nucleotide biosynthesis pathway. This chain is Aspartate carbamoyltransferase catalytic subunit, found in Bacillus pumilus (strain SAFR-032).